A 473-amino-acid chain; its full sequence is Laccase-3 (473 aa).

The signal sequence occupies residues 1-21 (MSFSSLRRALVFLGACSSALA). Plastocyanin-like domains lie at 23 to 148 (IGPV…LVIY) and 160 to 298 (VDDE…ILRY). Asparagine 75 is a glycosylation site (N-linked (GlcNAc...) asparagine). Cu cation is bound by residues histidine 85, histidine 87, histidine 130, and histidine 132. Intrachain disulfides connect cysteine 106/cysteine 462 and cysteine 138/cysteine 221. Residues asparagine 226, asparagine 283, asparagine 309, asparagine 346, asparagine 350, and asparagine 374 are each glycosylated (N-linked (GlcNAc...) asparagine). Positions 365-444 (TVPVLLQILN…AGLAIVFAED (80 aa)) constitute a Plastocyanin-like 3 domain. The Cu cation site is built by histidine 410, histidine 413, histidine 415, histidine 426, cysteine 427, histidine 428, and histidine 432. N-linked (GlcNAc...) asparagine glycosylation is present at asparagine 470.

Belongs to the multicopper oxidase family. Homodimer. Cu cation is required as a cofactor.

The protein resides in the secreted. It catalyses the reaction 4 hydroquinone + O2 = 4 benzosemiquinone + 2 H2O. Lignin degradation and detoxification of lignin-derived products. This Trametes villosa (White-rot fungus) protein is Laccase-3 (LCC3).